The sequence spans 137 residues: Peptide methionine sulfoxide reductase MsrB (137 aa).

Residues 7–129 (AEELKKNLSE…NSASLRFTDG (123 aa)) enclose the MsrB domain. Positions 46, 49, 95, and 98 each coordinate Zn(2+). C118 serves as the catalytic Nucleophile.

It belongs to the MsrB Met sulfoxide reductase family. The cofactor is Zn(2+).

It carries out the reaction L-methionyl-[protein] + [thioredoxin]-disulfide + H2O = L-methionyl-(R)-S-oxide-[protein] + [thioredoxin]-dithiol. This is Peptide methionine sulfoxide reductase MsrB from Escherichia coli O8 (strain IAI1).